The sequence spans 144 residues: Large ribosomal subunit protein uL15 (144 aa).

Residues 1-49 are disordered; it reads MRLNTLSPAAGAKSAAKRVGRGIGSGTGKTCGRGHKGQKSRSGGGVRVG. The span at 21-31 shows a compositional bias: gly residues; sequence RGIGSGTGKTC.

This sequence belongs to the universal ribosomal protein uL15 family. As to quaternary structure, part of the 50S ribosomal subunit.

Its function is as follows. Binds to the 23S rRNA. The chain is Large ribosomal subunit protein uL15 from Shewanella sediminis (strain HAW-EB3).